The sequence spans 300 residues: MKVIKTLSIINFFIFVTFNIKNESKYSNTFINNAYNMSIRRSMEESKPPTGAVAGSGAGAGSGAGAVAGSGAGAVAGSGAGAVAGSGAGAVAGSGAGAVAGSGAVAGSGAGNGANPGADAERGPSTPATTTTTTTTNDAEASTSTSSENRNHNNAETNPKGKGEVQKPNQANKETQNNSNVQQDSQTKSNVPRTQDADTKSPTAQPEQAENSAPTAEQTESPELQSAPENKGTGQHGHMHGSRNNHPQNTSDSQKECTDGNKENCGAATSLLNNSSNIASINKFVVLISATLVLSFAIFI.

An N-terminal signal peptide occupies residues 1-20 (MKVIKTLSIINFFIFVTFNI). N-linked (GlcNAc...) asparagine glycans are attached at residues Asn-22 and Asn-36. The polymorphic region stretch occupies residues 44 to 226 (EESKPPTGAV…EQTESPELQS (183 aa)). The stretch at 51 to 58 (GAVAGSGA) is one 1; inverted repeat. The tract at residues 51–74 (GAVAGSGAGAGSGAGAVAGSGAGA) is 7 X 8 AA tandem repeats of G-S-G-A-G-A-V-A. A run of 5 repeats spans residues 61-68 (GSGAGAVA), 69-76 (GSGAGAVA), 77-84 (GSGAGAVA), 85-92 (GSGAGAVA), and 93-100 (GSGAGAVA). The stretch at 103–110 (GAVAGSGA) is one 7; inverted repeat. A disordered region spans residues 111 to 261 (GNGANPGADA…DSQKECTDGN (151 aa)). Residues 124–148 (PSTPATTTTTTTTNDAEASTSTSSE) are compositionally biased toward low complexity. Residues 149-165 (NRNHNNAETNPKGKGEV) show a composition bias toward basic and acidic residues. Composition is skewed to polar residues over residues 167-193 (KPNQ…NVPR) and 200-228 (KSPT…QSAP). Asn-177 carries an N-linked (GlcNAc...) asparagine glycan. An N-linked (GlcNAc...) asparagine glycan is attached at Asn-249. An intrachain disulfide couples Cys-257 to Cys-265. N-linked (GlcNAc...) asparagine glycans are attached at residues Asn-273 and Asn-274. A lipid anchor (GPI-anchor amidated asparagine) is attached at Asn-274. The propeptide at 275-300 (SSNIASINKFVVLISATLVLSFAIFI) is removed in mature form.

Its subcellular location is the cell membrane. In terms of biological role, may play a role in the merozoite attachment to the erythrocyte. In Plasmodium falciparum (isolate mad71 / Papua New Guinea), this protein is Merozoite surface protein 2.